The following is a 182-amino-acid chain: Probable phosphoheptose isomerase (182 aa).

The SIS domain occupies Ile-29–Phe-182. Asn-44–Gly-46 serves as a coordination point for substrate. His-53 and Glu-57 together coordinate Zn(2+). Residues Glu-57, Asn-86–Asp-87, Ser-112–Ser-114, Ser-117, and Gln-164 contribute to the substrate site. Zn(2+)-binding residues include Gln-164 and His-172.

This sequence belongs to the SIS family. GmhA subfamily. Zn(2+) is required as a cofactor.

The protein resides in the cytoplasm. The enzyme catalyses 2 D-sedoheptulose 7-phosphate = D-glycero-alpha-D-manno-heptose 7-phosphate + D-glycero-beta-D-manno-heptose 7-phosphate. Its pathway is carbohydrate biosynthesis; D-glycero-D-manno-heptose 7-phosphate biosynthesis; D-glycero-alpha-D-manno-heptose 7-phosphate and D-glycero-beta-D-manno-heptose 7-phosphate from sedoheptulose 7-phosphate: step 1/1. Catalyzes the isomerization of sedoheptulose 7-phosphate in D-glycero-D-manno-heptose 7-phosphate. The sequence is that of Probable phosphoheptose isomerase from Thermoplasma acidophilum (strain ATCC 25905 / DSM 1728 / JCM 9062 / NBRC 15155 / AMRC-C165).